We begin with the raw amino-acid sequence, 53 residues long: Tsetse thrombin inhibitor (53 aa).

Residues 1-21 (MKFFTVLFFLLSIIYLIVAAP) form the signal peptide.

As to expression, expressed at high levels in salivary glands and midguts of adult tsetse flies.

The protein localises to the secreted. Functionally, potent and specific inhibitor of human thrombin. It is also a potent inhibitor of thrombin-induced platelet aggregation. It is capable of antagonizing host hemostasis and facilitating blood feeding. The polypeptide is Tsetse thrombin inhibitor (TTI) (Glossina morsitans morsitans (Savannah tsetse fly)).